Reading from the N-terminus, the 238-residue chain is Ribonuclease PH (238 aa).

Residues Arg86 and 124–126 each bind phosphate; that span reads GTR.

This sequence belongs to the RNase PH family. As to quaternary structure, homohexameric ring arranged as a trimer of dimers.

It carries out the reaction tRNA(n+1) + phosphate = tRNA(n) + a ribonucleoside 5'-diphosphate. Its function is as follows. Phosphorolytic 3'-5' exoribonuclease that plays an important role in tRNA 3'-end maturation. Removes nucleotide residues following the 3'-CCA terminus of tRNAs; can also add nucleotides to the ends of RNA molecules by using nucleoside diphosphates as substrates, but this may not be physiologically important. Probably plays a role in initiation of 16S rRNA degradation (leading to ribosome degradation) during starvation. This chain is Ribonuclease PH, found in Yersinia pseudotuberculosis serotype O:1b (strain IP 31758).